The chain runs to 396 residues: 4-hydroxy-3-methylbut-2-en-1-yl diphosphate synthase (ferredoxin) (396 aa).

[4Fe-4S] cluster is bound by residues C305, C308, C339, and E346.

This sequence belongs to the IspG family. It depends on [4Fe-4S] cluster as a cofactor.

It carries out the reaction (2E)-4-hydroxy-3-methylbut-2-enyl diphosphate + 2 oxidized [2Fe-2S]-[ferredoxin] + H2O = 2-C-methyl-D-erythritol 2,4-cyclic diphosphate + 2 reduced [2Fe-2S]-[ferredoxin] + H(+). It functions in the pathway isoprenoid biosynthesis; isopentenyl diphosphate biosynthesis via DXP pathway; isopentenyl diphosphate from 1-deoxy-D-xylulose 5-phosphate: step 5/6. Its function is as follows. Converts 2C-methyl-D-erythritol 2,4-cyclodiphosphate (ME-2,4cPP) into 1-hydroxy-2-methyl-2-(E)-butenyl 4-diphosphate. This chain is 4-hydroxy-3-methylbut-2-en-1-yl diphosphate synthase (ferredoxin), found in Gloeobacter violaceus (strain ATCC 29082 / PCC 7421).